The primary structure comprises 394 residues: Phosphopentomutase (394 aa).

Mn(2+) contacts are provided by Asp-13, Asp-286, His-291, Asp-327, His-328, and His-339.

The protein belongs to the phosphopentomutase family. Mn(2+) is required as a cofactor.

It localises to the cytoplasm. It carries out the reaction 2-deoxy-alpha-D-ribose 1-phosphate = 2-deoxy-D-ribose 5-phosphate. The catalysed reaction is alpha-D-ribose 1-phosphate = D-ribose 5-phosphate. It participates in carbohydrate degradation; 2-deoxy-D-ribose 1-phosphate degradation; D-glyceraldehyde 3-phosphate and acetaldehyde from 2-deoxy-alpha-D-ribose 1-phosphate: step 1/2. Its function is as follows. Isomerase that catalyzes the conversion of deoxy-ribose 1-phosphate (dRib-1-P) and ribose 1-phosphate (Rib-1-P) to deoxy-ribose 5-phosphate (dRib-5-P) and ribose 5-phosphate (Rib-5-P), respectively. The chain is Phosphopentomutase from Bacillus cereus (strain B4264).